Here is a 251-residue protein sequence, read N- to C-terminus: Flap endonuclease Xni (251 aa).

Residue Asp104 coordinates Mg(2+). In terms of domain architecture, 5'-3' exonuclease spans 160–249 (VLPRQLPDYW…IDGNLQQLRL (90 aa)). Leu171, Ala172, Pro180, Val182, and Ile185 together coordinate K(+). Residues 184-189 (GIGPKS) form an interaction with DNA region.

Belongs to the Xni family. Mg(2+) is required as a cofactor. The cofactor is K(+).

Its function is as follows. Has flap endonuclease activity. During DNA replication, flap endonucleases cleave the 5'-overhanging flap structure that is generated by displacement synthesis when DNA polymerase encounters the 5'-end of a downstream Okazaki fragment. This chain is Flap endonuclease Xni, found in Salmonella choleraesuis (strain SC-B67).